The primary structure comprises 329 residues: Ketol-acid reductoisomerase (NADP(+)) (329 aa).

The KARI N-terminal Rossmann domain maps to 2-182 (TQLFYDTDAD…GGTRAGILET (181 aa)). Residues 25 to 28 (YGSQ), Ser51, Ser53, and 83 to 86 (DEFQ) each bind NADP(+). Residue His108 is part of the active site. Gly134 contacts NADP(+). One can recognise a KARI C-terminal knotted domain in the interval 183–328 (NFKEETETDL…KGLRSMFSWL (146 aa)). Mg(2+) contacts are provided by Asp191, Glu195, Glu227, and Glu231. Ser252 provides a ligand contact to substrate.

Belongs to the ketol-acid reductoisomerase family. It depends on Mg(2+) as a cofactor.

The enzyme catalyses (2R)-2,3-dihydroxy-3-methylbutanoate + NADP(+) = (2S)-2-acetolactate + NADPH + H(+). It carries out the reaction (2R,3R)-2,3-dihydroxy-3-methylpentanoate + NADP(+) = (S)-2-ethyl-2-hydroxy-3-oxobutanoate + NADPH + H(+). The protein operates within amino-acid biosynthesis; L-isoleucine biosynthesis; L-isoleucine from 2-oxobutanoate: step 2/4. It participates in amino-acid biosynthesis; L-valine biosynthesis; L-valine from pyruvate: step 2/4. In terms of biological role, involved in the biosynthesis of branched-chain amino acids (BCAA). Catalyzes an alkyl-migration followed by a ketol-acid reduction of (S)-2-acetolactate (S2AL) to yield (R)-2,3-dihydroxy-isovalerate. In the isomerase reaction, S2AL is rearranged via a Mg-dependent methyl migration to produce 3-hydroxy-3-methyl-2-ketobutyrate (HMKB). In the reductase reaction, this 2-ketoacid undergoes a metal-dependent reduction by NADPH to yield (R)-2,3-dihydroxy-isovalerate. This Prochlorococcus marinus (strain AS9601) protein is Ketol-acid reductoisomerase (NADP(+)).